Here is a 3033-residue protein sequence, read N- to C-terminus: Genome polyprotein (3033 aa).

The residue at position 2 (Ser2) is an N-acetylserine; by host. Positions Ser2–Lys23 are interaction with STAT1. The segment at Ser2–Pro58 is interaction with EIF2AK2/PKR. Residues Ser2 to Arg59 form an interaction with DDX3X region. The segment at Ser2–Ser75 is disordered. Residues Ser2–Asn168 are Cytoplasmic-facing. 2 consecutive short sequence motifs (nuclear localization signal) follow at residues Pro5–Arg13 and Pro38–Arg43. Residues Pro7–Asn16 show a composition bias toward basic residues. The span at Gly32–Arg47 shows a compositional bias: low complexity. Position 53 is a phosphoserine; by host (Ser53). 2 consecutive short sequence motifs (nuclear localization signal) follow at residues Pro58–Pro64 and Pro66–Ser71. 2 positions are modified to phosphoserine; by host: Ser99 and Ser116. The interval Pro112–Ala152 is important for endoplasmic reticulum and mitochondrial localization. An interaction with APOA2 region spans residues Val122 to Ser173. The interval Tyr164 to Gly167 is important for lipid droplets localization. A helical membrane pass occupies residues Leu169 to Val189. A propeptide spans Leu178–Ala191 (ER anchor for the core protein, removed in mature form by host signal peptidase). At Ser190–Gly358 the chain is on the lumenal side. 3 N-linked (GlcNAc...) asparagine; by host glycosylation sites follow: Asn196, Asn209, and Asn234. The segment at Ile265–Gln296 is important for fusion. Asn305 carries an N-linked (GlcNAc...) asparagine; by host glycan. A helical transmembrane segment spans residues Leu359–Ala379. Residues Gly380–Leu729 lie on the Lumenal side of the membrane. Residues Thr385–Gln412 are HVR1. N-linked (GlcNAc...) (high mannose) asparagine; by host glycosylation is found at Asn417, Asn423, and Asn430. 4 disulfide bridges follow: Cys429–Cys554, Cys452–Cys459, Cys488–Cys496, and Cys505–Cys510. Residue Asn448 is glycosylated (N-linked (GlcNAc...) asparagine; by host). The segment at Glu475 to Asn480 is HVR2. Asn477 is a glycosylation site (N-linked (GlcNAc...) asparagine; by host). The interval Asp482–Pro495 is CD81-binding 1. Residue Asn534 is glycosylated (N-linked (GlcNAc...) asparagine; by host). Residues Pro546–Gly553 form a CD81-binding 2 region. Asn558 is a glycosylation site (N-linked (GlcNAc...) asparagine; by host). 4 cysteine pairs are disulfide-bonded: Cys566/Cys571, Cys585/Cys589, Cys601/Cys624, and Cys611/Cys648. Asn627 and Asn649 each carry an N-linked (GlcNAc...) (high mannose) asparagine; by host glycan. Residues Cys656 and Cys681 are joined by a disulfide bond. The tract at residues Ser664–Glu675 is PKR/eIF2-alpha phosphorylation homology domain (PePHD). Residues Leu730–Ala750 form a helical membrane-spanning segment. Topologically, residues Ala751–Ala761 are lumenal. The helical transmembrane segment at Ser762–Ile782 threads the bilayer. The Cytoplasmic segment spans residues Lys783–Val786. A helical transmembrane segment spans residues Thr787–Leu807. Residues Pro808–Thr817 are Lumenal-facing. Residues Glu818 to Ala838 form a helical membrane-spanning segment. The Cytoplasmic segment spans residues Tyr839–Cys885. A helical transmembrane segment spans residues Pro886 to Leu906. The region spanning Gly903–Leu1030 is the Peptidase C18 domain. Residues Arg907–Leu932 lie on the Lumenal side of the membrane. The interval Ser908–Arg1210 is protease NS2-3. Cys926 carries S-palmitoyl cysteine; by host lipidation. Residues Ser933–Ile953 traverse the membrane as a helical segment. Residues Ser933–Ile953 are interaction with host SCPS1. Over Tyr954–Thr1661 the chain is Cytoplasmic. Catalysis depends on for protease NS2 activity; shared with dimeric partner residues His956, Glu976, and Cys997. One can recognise a Peptidase S29 domain in the interval Ala1031–Pro1212. Active-site charge relay system; for serine protease NS3 activity residues include His1087 and Asp1111. Positions 1127 and 1129 each coordinate Zn(2+). Catalysis depends on Ser1169, which acts as the Charge relay system; for serine protease NS3 activity. 2 residues coordinate Zn(2+): Cys1175 and His1179. Residues Pro1221–His1373 form the Helicase ATP-binding domain. Residue Ala1234–Ser1241 coordinates ATP. 2 residues coordinate Mg(2+): Ser1241 and Glu1321. The DECH box signature appears at Asp1320–His1323. The interval Gln1490 to Ile1502 is RNA-binding. The chain crosses the membrane as a helical span at residues Ser1662–Gly1682. The NS3-binding stretch occupies residues Cys1683–Gln1694. Residues Cys1683 to Thr1809 lie on the Cytoplasmic side of the membrane. The helical transmembrane segment at Thr1810–Ala1830 threads the bilayer. The Lumenal segment spans residues Thr1831 to Gly1832. A helical membrane pass occupies residues Phe1833 to Val1853. A topological domain (cytoplasmic) is located at residue Asp1854. Residues Val1855–Gly1875 traverse the membrane as a helical segment. The Lumenal portion of the chain corresponds to Glu1876 to Asn1885. The chain crosses the membrane as a helical span at residues Leu1886 to Leu1906. Over Arg1907–Cys1976 the chain is Cytoplasmic. Cys1976 carries S-palmitoyl cysteine; by host lipidation. Residues Ala1977–Met2007 lie within the membrane without spanning it. The Cytoplasmic portion of the chain corresponds to Pro2008 to Arg3012. 4 residues coordinate Zn(2+): Cys2015, Cys2033, Cys2035, and Cys2056. The tract at residues Glu2124 to Ala2212 is FKBP8-binding. Residues Glu2124–Ala2332 are transcriptional activation. The interaction with non-structural protein 4A stretch occupies residues Pro2139 to Pro2143. Positions Arg2193–Ala2212 are disordered. An interaction with host SKP2 region spans residues Arg2193–Glu2460. A phosphoserine; by host mark is found at Ser2198, Ser2201, Ser2205, Ser2208, Ser2211, and Ser2214. Positions Ser2198–Ala2212 are enriched in low complexity. Positions Ser2214–Lys2249 are ISDR. The segment at Ser2214 to Leu2275 is interaction with EIF2AK2/PKR. The tract at residues Lys2249–Tyr2306 is NS4B-binding. Positions Glu2299–Pro2376 are V3. A disordered region spans residues Pro2308–Arg2328. The SH3-binding motif lies at Ala2322 to Pro2325. The Nuclear localization signal motif lies at Pro2327–Leu2335. A Glycyl lysine isopeptide (Lys-Gly) (interchain with G-Cter in ubiquitin) cross-link involves residue Lys2350. The interval Gly2353–Thr2431 is disordered. Polar residues predominate over residues Ser2361–Thr2373. 2 positions are modified to phosphoserine; by host: Ser2471 and Ser2484. One can recognise a RdRp catalytic domain in the interval Pro2656–Asp2774. 3 residues coordinate Mg(2+): Asp2662, Asp2760, and Asp2761. The helical transmembrane segment at Phe3013–Arg3033 threads the bilayer.

The protein belongs to the hepacivirus polyprotein family. As to quaternary structure, homooligomer. Interacts with E1 (via C-terminus). Interacts with the non-structural protein 5A. Interacts (via N-terminus) with host STAT1 (via SH2 domain); this interaction results in decreased STAT1 phosphorylation and ubiquitin-mediated proteasome-dependent STAT1 degradation, leading to decreased IFN-stimulated gene transcription. Interacts with host STAT3; this interaction constitutively activates STAT3. Interacts with host LTBR receptor. Interacts with host TNFRSF1A receptor and possibly induces apoptosis. Interacts with host HNRPK. Interacts with host YWHAE. Interacts with host UBE3A/E6AP. Interacts with host DDX3X. Interacts with host APOA2. Interacts with host RXRA protein. Interacts with host SP110 isoform 3/Sp110b; this interaction sequesters the transcriptional corepressor SP110 away from the nucleus. Interacts with host CREB3 nuclear transcription protein; this interaction triggers cell transformation. Interacts with host ACY3. Interacts with host C1QR1. Interacts with host RBM24; this interaction, which enhances the interaction of the mature core protein with 5'-UTR, may inhibit viral translation and favor replication. Interacts with host EIF2AK2/PKR; this interaction induces the autophosphorylation of EIF2AK2. Part of the viral assembly initiation complex composed of NS2, E1, E2, NS3, NS4A, NS5A and the mature core protein. Forms a heterodimer with envelope glycoprotein E2. Interacts with mature core protein. Interacts with protease NS2. The heterodimer E1/E2 interacts with host CLDN1; this interaction plays a role in viral entry into host cell. Interacts with host SPSB2 (via C-terminus). Part of the viral assembly initiation complex composed of NS2, E1, E2, NS3, NS4A, NS5A and the mature core protein. Interacts with host NEURL3; this interaction prevents E1 binding to glycoprotein E2. In terms of assembly, forms a heterodimer with envelope glycoprotein E1. Interacts with host CD81 and SCARB1 receptors; these interactions play a role in viral entry into host cell. Interacts with host EIF2AK2/PKR; this interaction inhibits EIF2AK2 and probably allows the virus to evade the innate immune response. Interacts with host CD209/DC-SIGN and CLEC4M/DC-SIGNR. Interact with host SPCS1; this interaction is essential for viral particle assembly. Interacts with protease NS2. The heterodimer E1/E2 interacts with host CLDN1; this interaction plays a role in viral entry into host cell. Part of the viral assembly initiation complex composed of NS2, E1, E2, NS3, NS4A, NS5A and the mature core protein. Interacts with host SLC3A2/4F2hc; the interaction may facilitate viral entry into host cell. Interacts with human PLSCR1. As to quaternary structure, homohexamer. Homoheptamer. Interacts with protease NS2. Homodimer. Interacts with host SPCS1; this interaction is essential for viral particle assembly. Interacts with envelope glycoprotein E1. Interacts with envelope glycoprotein E2. Interacts with viroporin p7. Interacts with serine protease/helicase NS3. Part of the replication complex composed of NS2, NS3, NS4A, NS4B, NS5A and the RNA-directed RNA polymerase embedded in an ER-derived membranous web. Part of the viral assembly initiation complex composed of NS2, E1, E2, NS3, NS4A, NS5A and the mature core protein. In terms of assembly, interacts with protease NS2. Interacts with non-structural protein 4A; this interaction stabilizes the folding of NS3 serine protease. NS3-NS4A interaction is essential for NS3 activation and allows membrane anchorage of the latter. NS3/NS4A complex also prevents phosphorylation of host IRF3, thus preventing the establishment of dsRNA induced antiviral state. Interacts with host MAVS; this interaction leads to the cleavage and inhibition of host MAVS. Interacts with host TICAM1; this interaction leads to the cleavage and inhibition of host TICAM1. Interacts with host TANK-binding kinase/TBK1; this interaction results in the inhibition of the association between TBK1 and IRF3, which leads to the inhibition of IRF3 activation. Interacts with host RBM24. Part of the replication complex composed of NS2, NS3, NS4A, NS4B, NS5A and the RNA-directed RNA polymerase embedded in an ER-derived membranous web. Part of the viral assembly initiation complex composed of NS2, E1, E2, NS3, NS4A, NS5A and the mature core protein. As to quaternary structure, interacts with NS3 serine protease; this interaction stabilizes the folding of NS3 serine protease. NS3-NS4A interaction is essential for NS3 activation and allows membrane anchorage of the latter. Interacts with non-structural protein 5A (via N-terminus). Part of the replication complex composed of NS2, NS3, NS4A, NS4B, NS5A and the RNA-directed RNA polymerase embedded in an ER-derived membranous web. Part of the viral assembly initiation complex composed of NS2, E1, E2, NS3, NS4A, NS5A and the mature core protein. Homomultimer. Interacts with non-structural protein NS5A. Interacts with host PLA2G4C; this interaction likely initiates the recruitment of replication complexes to lipid droplets. Interacts with host STING; this interaction disrupts the interaction between STING and TBK1 thereby suppressing the interferon signaling. Part of the replication complex composed of NS2, NS3, NS4A, NS4B, NS5A and the RNA-directed RNA polymerase embedded in an ER-derived membranous web. In terms of assembly, monomer. Homodimer; dimerization is required for RNA-binding. Interacts with the mature core protein. Interacts (via N-terminus) with non-structural protein 4A. Interacts with non-structural protein 4B. Interacts (via region D2) with RNA-directed RNA polymerase. Part of the viral assembly initiation complex composed of NS2, E1, E2, NS3, NS4A, NS5A and the mature core protein. Part of the replication complex composed of NS2, NS3, NS4A, NS4B, NS5A and the RNA-directed RNA polymerase embedded in an ER-derived membranous web. Interacts with host GRB2. Interacts with host BIN1. Interacts with host PIK3R1. Interacts with host SRCAP. Interacts with host FKBP8. Interacts (via C-terminus) with host VAPB (via MSP domain). Interacts with host EIF2AK2/PKR; this interaction leads to disruption of EIF2AK2 dimerization by NS5A and probably allows the virus to evade the innate immune response. Interacts (via N-terminus) with host PACSIN2 (via N-terminus); this interaction attenuates protein kinase C alpha-mediated phosphorylation of PACSIN2 by disrupting the interaction between PACSIN2 and PRKCA. Interacts (via N-terminus) with host SRC kinase (via SH2 domain). Interacts with most Src-family kinases. Interacts with host IFI27 and SKP2; promotes the ubiquitin-mediated proteasomal degradation of NS5A. Interacts with host GPS2. Interacts with host TNFRSF21; this interaction allows the modulation by the virus of JNK, p38 MAPK, STAT3, and Akt signaling pathways in a DR6-dependent manner. Interacts (via N-terminus) with host CIDEB (via N-terminus); this interaction seems to regulate the association of HCV particles with APOE. Interacts with host CHKA/Choline Kinase-alpha; CHKA bridges host PI4KA and NS5A and potentiates NS5A-stimulated PI4KA activity, which then facilitates the targeting of the ternary complex to the ER for viral replication. Interacts with host SPSB2 (via C-terminus); this interaction targets NS5A for ubiquitination and degradation. Interacts with host RAB18; this interaction may promote the association of NS5A and other replicase components with lipid droplets. Interacts (via region D2) with host PPIA/CYPA; the interaction stimulates RNA-binding ability of NS5A and is dependent on the peptidyl-prolyl cis-trans isomerase activity of PPIA/CYPA. Interacts with host TRIM14; this interaction induces the degradation of NS5A. As to quaternary structure, homooligomer. Interacts with non-structural protein 5A. Interacts with host VAPB. Interacts with host PRK2/PKN2. Interacts with host HNRNPA1 and SEPT6; these interactions facilitate viral replication. Part of the replication complex composed of NS2, NS3, NS4A, NS4B, NS5A and the RNA-directed RNA polymerase. It depends on Zn(2+) as a cofactor. Mg(2+) is required as a cofactor. Post-translationally, specific enzymatic cleavages in vivo yield mature proteins. The structural proteins, core, E1, E2 and p7 are produced by proteolytic processing by host signal peptidases. The core protein precursor is synthesized as a 23 kDa, which is retained in the ER membrane through the hydrophobic signal peptide. Cleavage by the signal peptidase releases the 21 kDa mature core protein. The cleavage of the core protein precursor occurs between aminoacids 176 and 188 but the exact cleavage site is not known. Some degraded forms of the core protein appear as well during the course of infection. The other proteins (p7, NS2, NS3, NS4A, NS4B, NS5A and NS5B) are cleaved by the viral proteases. Autoprocessing between NS2 and NS3 is mediated by the NS2 cysteine protease catalytic domain and regulated by the NS3 N-terminal domain. In terms of processing, phosphorylated by host PKC and PKA. Ubiquitinated; mediated by UBE3A and leading to core protein subsequent proteasomal degradation. Post-translationally, highly N-glycosylated. In terms of processing, palmitoylation is required for NS2/3 autoprocessing and E2 recruitment to membranes. Palmitoylated. This modification may play a role in its polymerization or in protein-protein interactions. Post-translationally, phosphorylated on serines in a basal form termed p56. p58 is a hyperphosphorylated form of p56. p56 and p58 coexist in the cell in roughly equivalent amounts. Hyperphosphorylation is dependent on the presence of NS4A. Host CSNK1A1/CKI-alpha or RPS6KB1 kinases may be responsible for NS5A phosphorylation. In terms of processing, tyrosine phosphorylation is essential for the interaction with host SRC. Ubiquitinated. Ubiquitination, most probably at Lys-2350, mediated by host IFI27 and SKP2 leads to proteasomal degradation, restricting viral infection. Ubiquitination by host TRIM22 leads to interruption of viral replication. Post-translationally, the N-terminus is phosphorylated by host PRK2/PKN2.

It localises to the host endoplasmic reticulum membrane. The protein resides in the host mitochondrion membrane. Its subcellular location is the virion. The protein localises to the host cytoplasm. It is found in the host nucleus. It localises to the host lipid droplet. The protein resides in the virion membrane. Its subcellular location is the host mitochondrion. The protein localises to the host cell membrane. It is found in the host perinuclear region. The catalysed reaction is Hydrolysis of four peptide bonds in the viral precursor polyprotein, commonly with Asp or Glu in the P6 position, Cys or Thr in P1 and Ser or Ala in P1'.. It catalyses the reaction a ribonucleoside 5'-triphosphate + H2O = a ribonucleoside 5'-diphosphate + phosphate + H(+). It carries out the reaction ATP + H2O = ADP + phosphate + H(+). The enzyme catalyses RNA(n) + a ribonucleoside 5'-triphosphate = RNA(n+1) + diphosphate. Its activity is regulated as follows. Inhibited by the antiviral drug hexamethylene amiloride. Inhibition by amantadine appears to be genotype-dependent. Also inhibited by long-alkyl-chain iminosugar derivatives. Activity is up-regulated by PRK2/PKN2-mediated phosphorylation. In terms of biological role, packages viral RNA to form a viral nucleocapsid, and promotes virion budding. Participates in the viral particle production as a result of its interaction with the non-structural protein 5A. Binds RNA and may function as a RNA chaperone to induce the RNA structural rearrangements taking place during virus replication. Modulates viral translation initiation by interacting with viral IRES and 40S ribosomal subunit. Affects various cell signaling pathways, host immunity and lipid metabolism. Prevents the establishment of cellular antiviral state by blocking the interferon-alpha/beta (IFN-alpha/beta) and IFN-gamma signaling pathways and by blocking the formation of phosphorylated STAT1 and promoting ubiquitin-mediated proteasome-dependent degradation of STAT1. Activates STAT3 leading to cellular transformation. Regulates the activity of cellular genes, including c-myc and c-fos. May repress the promoter of p53, and sequester CREB3 and SP110 isoform 3/Sp110b in the cytoplasm. Represses cell cycle negative regulating factor CDKN1A, thereby interrupting an important check point of normal cell cycle regulation. Targets transcription factors involved in the regulation of inflammatory responses and in the immune response: suppresses TNF-induced NF-kappa-B activation, and activates AP-1. Binds to dendritic cells (DCs) via C1QR1, resulting in down-regulation of T-lymphocytes proliferation. Alters lipid metabolism by interacting with hepatocellular proteins involved in lipid accumulation and storage. Induces up-regulation of FAS promoter activity, and thereby contributes to the increased triglyceride accumulation in hepatocytes (steatosis). Its function is as follows. Forms a heterodimer with envelope glycoprotein E2, which mediates virus attachment to the host cell, virion internalization through clathrin-dependent endocytosis and fusion with host membrane. Fusion with the host cell is most likely mediated by both E1 and E2, through conformational rearrangements of the heterodimer required for fusion rather than a classical class II fusion mechanism. E1/E2 heterodimer binds host apolipoproteins such as APOB and ApoE thereby forming a lipo-viro-particle (LVP). APOE associated to the LVP allows the initial virus attachment to cell surface receptors such as the heparan sulfate proteoglycans (HSPGs), syndecan-1 (SDC1), syndecan-1 (SDC2), the low-density lipoprotein receptor (LDLR) and scavenger receptor class B type I (SCARB1). The cholesterol transfer activity of SCARB1 allows E2 exposure and binding of E2 to SCARB1 and the tetraspanin CD81. E1/E2 heterodimer binding on CD81 activates the epithelial growth factor receptor (EGFR) signaling pathway. Diffusion of the complex E1-E2-EGFR-SCARB1-CD81 to the cell lateral membrane allows further interaction with Claudin 1 (CLDN1) and occludin (OCLN) to finally trigger HCV entry. Forms a heterodimer with envelope glycoprotein E1, which mediates virus attachment to the host cell, virion internalization through clathrin-dependent endocytosis and fusion with host membrane. Fusion with the host cell is most likely mediated by both E1 and E2, through conformational rearrangements of the heterodimer required for fusion rather than a classical class II fusion mechanism. The interaction between envelope glycoprotein E2 and host apolipoprotein E/APOE allows the proper assembly, maturation and infectivity of the viral particles. This interaction is probably promoted via the up-regulation of cellular autophagy by the virus. E1/E2 heterodimer binds host apolipoproteins such as APOB and APOE thereby forming a lipo-viro-particle (LVP). APOE associated to the LVP allows the initial virus attachment to cell surface receptors such as the heparan sulfate proteoglycans (HSPGs), syndecan-1 (SDC1), syndecan-1 (SDC2), the low-density lipoprotein receptor (LDLR) and scavenger receptor class B type I (SCARB1). The cholesterol transfer activity of SCARB1 allows E2 exposure and binding of E2 to SCARB1 and the tetraspanin CD81. E1/E2 heterodimer binding on CD81 activates the epithelial growth factor receptor (EGFR) signaling pathway. Diffusion of the complex E1-E2-EGFR-SCARB1-CD81 to the cell lateral membrane allows further interaction with Claudin 1 (CLDN1) and occludin (OCLN) to finally trigger HCV entry. Inhibits host EIF2AK2/PKR activation, preventing the establishment of an antiviral state. Viral ligand for CD209/DC-SIGN and CLEC4M/DC-SIGNR, which are respectively found on dendritic cells (DCs), and on liver sinusoidal endothelial cells and macrophage-like cells of lymph node sinuses. These interactions allow the capture of circulating HCV particles by these cells and subsequent facilitated transmission to permissive cells such as hepatocytes and lymphocyte subpopulations. The interaction between E2 and host amino acid transporter complex formed by SLC3A2 and SLC7A5/LAT1 may facilitate viral entry into host cell. Functionally, ion channel protein that acts as a viroporin and plays an essential role in the assembly, envelopment and secretion of viral particles. Regulates the host cell secretory pathway, which induces the intracellular retention of viral glycoproteins and favors assembly of viral particles. Creates a pore in acidic organelles and releases Ca(2+) and H(+) in the cytoplasm of infected cells, leading to a productive viral infection. High levels of cytoplasmic Ca(2+) may trigger membrane trafficking and transport of viral ER-associated proteins to viroplasms, sites of viral genome replication. This ionic imbalance induces the assembly of the inflammasome complex, which triggers the maturation of pro-IL-1beta into IL-1beta through the action of caspase-1. Targets also host mitochondria and induces mitochondrial depolarization. In addition of its role as a viroporin, acts as a lipid raft adhesion factor. In terms of biological role, cysteine protease required for the proteolytic auto-cleavage between the non-structural proteins NS2 and NS3. The N-terminus of NS3 is required for the function of NS2 protease (active region NS2-3). Promotes the initiation of viral particle assembly by mediating the interaction between structural and non-structural proteins. Its function is as follows. Displays three enzymatic activities: serine protease with a chymotrypsin-like fold, NTPase and RNA helicase. NS3 serine protease, in association with NS4A, is responsible for the cleavages of NS3-NS4A, NS4A-NS4B, NS4B-NS5A and NS5A-NS5B. The NS3/NS4A complex prevents phosphorylation of host IRF3, thus preventing the establishment of dsRNA induced antiviral state. The NS3/NS4A complex induces host amino acid transporter component SLC3A2, thus contributing to HCV propagation. NS3 RNA helicase binds to RNA and unwinds both dsDNA and dsRNA in the 3' to 5' direction, and likely resolves RNA complicated stable secondary structures in the template strand. Binds a single ATP and catalyzes the unzipping of a single base pair of dsRNA. Inhibits host antiviral proteins TBK1 and IRF3 thereby preventing the establishment of an antiviral state. Cleaves host MAVS/CARDIF thereby preventing the establishment of an antiviral state. Cleaves host TICAM1/TRIF, thereby disrupting TLR3 signaling and preventing the establishment of an antiviral state. Peptide cofactor which forms a non-covalent complex with the N-terminal of NS3 serine protease. The NS3/NS4A complex prevents phosphorylation of host IRF3, thus preventing the establishment of dsRNA induced antiviral state. The NS3/NS4A complex induces host amino acid transporter component SLC3A2, thus contributing to HCV propagation. Functionally, induces a specific membrane alteration that serves as a scaffold for the virus replication complex. This membrane alteration gives rise to the so-called ER-derived membranous web that contains the replication complex. NS4B self-interaction contributes to its function in membranous web formation. Promotes host TRIF protein degradation in a CASP8-dependent manner thereby inhibiting host TLR3-mediated interferon signaling. Disrupts the interaction between STING and TBK1 contributing to the inhibition of interferon signaling. In terms of biological role, phosphorylated protein that is indispensable for viral replication and assembly. Both hypo- and hyperphosphorylated states are required for the viral life cycle. The hyperphosphorylated form of NS5A is an inhibitor of viral replication. Involved in RNA-binding and especially in binding to the viral genome. Zinc is essential for RNA-binding. Participates in the viral particle production as a result of its interaction with the mature viral core protein. Its interaction with host VAPB may target the viral replication complex to vesicles. Down-regulates viral IRES translation initiation. Mediates interferon resistance, presumably by interacting with and inhibiting host EIF2AK2/PKR. Prevents BIN1-induced apoptosis. Acts as a transcriptional activator of some host genes important for viral replication when localized in the nucleus. Via the interaction with host PACSIN2, modulates lipid droplet formation in order to promote virion assembly. Modulates TNFRSF21/DR6 signaling pathway for viral propagation. Its function is as follows. RNA-dependent RNA polymerase that performs primer-template recognition and RNA synthesis during viral replication. Initiates RNA transcription/replication at a flavin adenine dinucleotide (FAD), resulting in a 5'- FAD cap on viral RNAs. In this way, recognition of viral 5' RNA by host pattern recognition receptors can be bypassed, thereby evading activation of antiviral pathways. This is Genome polyprotein from Hepatitis C virus genotype 2k (isolate VAT96) (HCV).